The primary structure comprises 453 residues: L-cysteine:1D-myo-inositol 2-amino-2-deoxy-alpha-D-glucopyranoside ligase (453 aa).

Position 58 (Cys58) interacts with Zn(2+). Residues 58–61 (CGIT), Thr73, and 96–98 (NVT) each bind L-cysteinyl-5'-AMP. The short motif at 60-70 (ITPYDATHMGH) is the 'HIGH' region element. A 'ERGGDP' region motif is present at residues 221–226 (ERGGDP). Trp262 lines the L-cysteinyl-5'-AMP pocket. Residue Cys266 coordinates Zn(2+). 284–286 (GND) is an L-cysteinyl-5'-AMP binding site. His291 contacts Zn(2+). Val317 contributes to the L-cysteinyl-5'-AMP binding site. The 'KMSKS' region motif lies at 323–327 (KMSKS).

Belongs to the class-I aminoacyl-tRNA synthetase family. MshC subfamily. As to quaternary structure, monomer. It depends on Zn(2+) as a cofactor.

It catalyses the reaction 1D-myo-inositol 2-amino-2-deoxy-alpha-D-glucopyranoside + L-cysteine + ATP = 1D-myo-inositol 2-(L-cysteinylamino)-2-deoxy-alpha-D-glucopyranoside + AMP + diphosphate + H(+). Functionally, catalyzes the ATP-dependent condensation of GlcN-Ins and L-cysteine to form L-Cys-GlcN-Ins. This Rothia mucilaginosa (strain DY-18) (Stomatococcus mucilaginosus) protein is L-cysteine:1D-myo-inositol 2-amino-2-deoxy-alpha-D-glucopyranoside ligase.